The primary structure comprises 372 residues: Bifunctional coenzyme PQQ synthesis protein C/D (372 aa).

The pqqC stretch occupies residues 1–267; that stretch reads MTAQFPPPVP…VAETNSAEDS (267 aa). The disordered stretch occupies residues 260–288; sequence ETNSAEDSPAAAASPAATTAEPTAFSGSD. A compositionally biased stretch (low complexity) spans 264–283; sequence AEDSPAAAASPAATTAEPTA. The linker stretch occupies residues 268 to 280; that stretch reads PAAAASPAATTAE. The segment at 281-372 is pqqD; the sequence is PTAFSGSDVP…GLAQKRVLER (92 aa).

In the N-terminal section; belongs to the PqqC family. It in the C-terminal section; belongs to the PqqD family. As to quaternary structure, monomer. Interacts with PqqE.

It catalyses the reaction 6-(2-amino-2-carboxyethyl)-7,8-dioxo-1,2,3,4,7,8-hexahydroquinoline-2,4-dicarboxylate + 3 O2 = pyrroloquinoline quinone + 2 H2O2 + 2 H2O + H(+). It participates in cofactor biosynthesis; pyrroloquinoline quinone biosynthesis. Its function is as follows. The PqqC region is involved in ring cyclization and eight-electron oxidation of 3a-(2-amino-2-carboxyethyl)-4,5-dioxo-4,5,6,7,8,9-hexahydroquinoline-7,9-dicarboxylic-acid to PQQ. Functionally, the PqqD region functions as a PqqA binding domain and presents PqqA to PqqE. The chain is Bifunctional coenzyme PQQ synthesis protein C/D (pqqCD) from Methylorubrum extorquens (strain ATCC 14718 / DSM 1338 / JCM 2805 / NCIMB 9133 / AM1) (Methylobacterium extorquens).